Reading from the N-terminus, the 597-residue chain is Cytosolic phospholipase A2 gamma (597 aa).

Residues 1–597 (MELSSGVCPA…FKKSHNISKD (597 aa)) enclose the PLA2c domain. The active-site Nucleophile is Ser-83. The active-site Proton acceptor is Asp-417. The segment at 576–597 (RVKDPQGSQTVEFKKSHNISKD) is disordered. Positions 587-597 (EFKKSHNISKD) are enriched in basic and acidic residues.

In terms of tissue distribution, highly expressed in ovary, where it localizes to oocytes in preantral and antral stage follicles (at protein level). Not detected in other tissues tested.

It is found in the nucleus. The protein resides in the nucleoplasm. It localises to the nucleus envelope. Its subcellular location is the cytoplasm. The protein localises to the cell cortex. It is found in the cytoskeleton. The protein resides in the spindle. The catalysed reaction is a 1,2-diacyl-sn-glycero-3-phosphocholine + H2O = a 1-acyl-sn-glycero-3-phosphocholine + a fatty acid + H(+). The enzyme catalyses a 1-O-alkyl-2-acyl-sn-glycero-3-phosphocholine + H2O = a 1-O-alkyl-sn-glycero-3-phosphocholine + a fatty acid + H(+). It catalyses the reaction 1,2-dihexadecanoyl-sn-glycero-3-phosphocholine + H2O = 1-hexadecanoyl-sn-glycero-3-phosphocholine + hexadecanoate + H(+). It carries out the reaction 1-hexadecanoyl-2-(9Z-octadecenoyl)-sn-glycero-3-phosphocholine + H2O = 1-hexadecanoyl-sn-glycero-3-phosphocholine + (9Z)-octadecenoate + H(+). The catalysed reaction is 1-hexadecanoyl-2-(9Z,12Z-octadecadienoyl)-sn-glycero-3-phosphocholine + H2O = (9Z,12Z)-octadecadienoate + 1-hexadecanoyl-sn-glycero-3-phosphocholine + H(+). The enzyme catalyses 1-hexadecanoyl-2-(5Z,8Z,11Z,14Z-eicosatetraenoyl)-sn-glycero-3-phosphocholine + H2O = 1-hexadecanoyl-sn-glycero-3-phosphocholine + (5Z,8Z,11Z,14Z)-eicosatetraenoate + H(+). It catalyses the reaction 1-O-hexadecyl-2-(5Z,8Z,11Z,14Z)-eicosatetraenoyl-sn-glycero-3-phosphocholine + H2O = 1-O-hexadecyl-sn-glycero-3-phosphocholine + (5Z,8Z,11Z,14Z)-eicosatetraenoate + H(+). It carries out the reaction 1-hexadecanoyl-2-(5Z,8Z,11Z,14Z-eicosatetraenoyl)-sn-glycero-3-phosphocholine + H2O = 2-(5Z,8Z,11Z,14Z)-eicosatetraenoyl-sn-glycero-3-phosphocholine + hexadecanoate + H(+). The catalysed reaction is a 1-acyl-sn-glycero-3-phosphocholine + H2O = sn-glycerol 3-phosphocholine + a fatty acid + H(+). The enzyme catalyses 1-hexadecanoyl-sn-glycero-3-phosphocholine + H2O = sn-glycerol 3-phosphocholine + hexadecanoate + H(+). It catalyses the reaction 2 1-hexadecanoyl-sn-glycero-3-phosphocholine = 1,2-dihexadecanoyl-sn-glycero-3-phosphocholine + sn-glycerol 3-phosphocholine. It carries out the reaction 1-hexadecanoyl-sn-glycero-3-phosphoethanolamine + 1-hexadecanoyl-sn-glycero-3-phosphocholine = 1,2-dihexadecanoyl-sn-glycero-3-phosphoethanolamine + sn-glycerol 3-phosphocholine. The catalysed reaction is 1-hexadecanoyl-sn-glycero-3-phosphoethanolamine + 1-hexadecanoyl-sn-glycero-3-phosphocholine = sn-glycero-3-phosphoethanolamine + 1,2-dihexadecanoyl-sn-glycero-3-phosphocholine. The enzyme catalyses 2 1-hexadecanoyl-sn-glycero-3-phosphoethanolamine = 1,2-dihexadecanoyl-sn-glycero-3-phosphoethanolamine + sn-glycero-3-phosphoethanolamine. It catalyses the reaction 1-O-hexadecyl-sn-glycero-3-phosphocholine + 1-hexadecanoyl-sn-glycero-3-phosphocholine = 1-O-hexadecyl-2-hexadecanoyl-sn-glycero-3-phosphocholine + sn-glycerol 3-phosphocholine. It carries out the reaction a 1-O-(1Z-alkenyl)-sn-glycero-3-phosphoethanolamine + 1-hexadecanoyl-sn-glycero-3-phosphocholine = 1-O-(1Z)-alkenyl-2-hexadecanoyl-sn-glycero-3-phosphoethanolamine + sn-glycerol 3-phosphocholine. The catalysed reaction is 1-O-hexadecyl-sn-glycero-3-phosphocholine + 1-hexadecanoyl-sn-glycero-3-phosphoethanolamine = 1-O-hexadecyl-2-hexadecanoyl-sn-glycero-3-phosphocholine + sn-glycero-3-phosphoethanolamine. The enzyme catalyses 1-octadecanoyl-2-(5Z,8Z,11Z,14Z)-eicosatetraenoyl-sn-glycero-3-phosphoethanolamine + 1-hexadecanoyl-sn-glycero-3-phosphocholine = 1-octadecanoyl-sn-glycero-3-phosphoethanolamine + 1-hexadecanoyl-2-(5Z,8Z,11Z,14Z-eicosatetraenoyl)-sn-glycero-3-phosphocholine. It catalyses the reaction 1-octadecanoyl-2-(5Z,8Z,11Z,14Z)-eicosatetraenoyl-sn-glycero-3-phosphoethanolamine + 1-O-hexadecyl-sn-glycero-3-phosphocholine = 1-octadecanoyl-sn-glycero-3-phosphoethanolamine + 1-O-hexadecyl-2-(5Z,8Z,11Z,14Z)-eicosatetraenoyl-sn-glycero-3-phosphocholine. It carries out the reaction 1-hexadecanoyl-2-(9Z,12Z-octadecadienoyl)-sn-glycero-3-phosphocholine + a 1-O-(1Z-alkenyl)-sn-glycero-3-phosphoethanolamine = 1-O-(1Z-alkenyl)-2-(9Z,12Z-octadecadienoyl)-sn-glycero-3-phosphoethanolamine + 1-hexadecanoyl-sn-glycero-3-phosphocholine. The catalysed reaction is 1-hexadecanoyl-2-(5Z,8Z,11Z,14Z-eicosatetraenoyl)-sn-glycero-3-phosphocholine + a 1-O-(1Z-alkenyl)-sn-glycero-3-phosphoethanolamine = 1-O-(1Z)-alkenyl-2-(5Z,8Z,11Z,14Z)-eicosatetraenoyl-sn-glycero-3-phosphoethanolamine + 1-hexadecanoyl-sn-glycero-3-phosphocholine. Calcium-independent phospholipase, lysophospholipase and O-acyltransferase involved in phospholipid remodeling. Preferentially hydrolyzes the ester bond of the fatty acyl group attached at sn-2 position of phospholipids with choline and ethanolamine head groups, producing lysophospholipids that are used in deacylation-reacylation cycles. Transfers the sn-1 fatty acyl from one lysophospholipid molecule to the sn-2 position of another lysophospholipid to form diacyl, alkylacyl and alkenylacyl glycerophospholipids. Cleaves ester bonds but not alkyl or alkenyl ether bonds at the sn-1 position of lysophospholipids. Catalyzes sn-2 fatty acyl transfer from phospholipids to the sn-2 position of 1-O-alkyl or 1-O-alkenyl lysophospholipids with lower efficiency. This is Cytosolic phospholipase A2 gamma from Mus musculus (Mouse).